The chain runs to 517 residues: Glycerol kinase 5 (517 aa).

Positions 23 and 24 each coordinate ATP. Positions 93, 270, and 271 each coordinate glycerol. ATP-binding residues include T292, G335, and G432.

The protein belongs to the FGGY kinase family.

It localises to the cytoplasm. The enzyme catalyses glycerol + ATP = sn-glycerol 3-phosphate + ADP + H(+). It participates in polyol metabolism; glycerol degradation via glycerol kinase pathway; sn-glycerol 3-phosphate from glycerol: step 1/1. Skin-specific kinase that plays a key role in glycerol metabolism, catalyzing its phosphorylation to produce sn-glycerol 3-phosphate. Involved in skin-specific regulation of sterol regulatory element-binding protein (SREBP) processing and lipid biosynthesis. The protein is Glycerol kinase 5 (GK5) of Gallus gallus (Chicken).